Reading from the N-terminus, the 442-residue chain is 4-alpha-glucanotransferase (442 aa).

Ca(2+) is bound by residues D13, N15, D17, V19, and D21. Residue D186 is the Nucleophile of the active site. Residue E216 is the Proton donor of the active site.

Belongs to the glycosyl hydrolase 13 family. In terms of assembly, monomer. Ca(2+) serves as cofactor.

The protein resides in the cytoplasm. It catalyses the reaction Transfers a segment of a (1-&gt;4)-alpha-D-glucan to a new position in an acceptor, which may be glucose or a (1-&gt;4)-alpha-D-glucan.. In terms of biological role, hydrolyzes the 1,4-alpha-glycoside bonds in oligomeric and polymeric 1,4-alpha-glucans and transfers oligosaccharides (maltotriose being the shortest one) to acceptor maltodextrins. This is 4-alpha-glucanotransferase (mgtA) from Thermotoga neapolitana.